Here is a 70-residue protein sequence, read N- to C-terminus: Sec-independent protein translocase protein TatA (70 aa).

The chain crosses the membrane as a helical span at residues 1-21 (MGSFSVWHWLIVLVIVLVLFG). A disordered region spans residues 42–70 (GMADEDQTPPPADANANAKTVDHKADEIK). Residues 61–70 (TVDHKADEIK) show a composition bias toward basic and acidic residues.

The protein belongs to the TatA/E family. In terms of assembly, the Tat system comprises two distinct complexes: a TatABC complex, containing multiple copies of TatA, TatB and TatC subunits, and a separate TatA complex, containing only TatA subunits. Substrates initially bind to the TatABC complex, which probably triggers association of the separate TatA complex to form the active translocon.

Its subcellular location is the cell inner membrane. In terms of biological role, part of the twin-arginine translocation (Tat) system that transports large folded proteins containing a characteristic twin-arginine motif in their signal peptide across membranes. TatA could form the protein-conducting channel of the Tat system. The polypeptide is Sec-independent protein translocase protein TatA (Agrobacterium fabrum (strain C58 / ATCC 33970) (Agrobacterium tumefaciens (strain C58))).